The following is a 27-amino-acid chain: Fructokinase (27 aa).

It belongs to the ROK (NagC/XylR) family. In terms of assembly, homodimer. Requires Mg(2+) as cofactor.

The enzyme catalyses D-fructose + ATP = D-fructose 6-phosphate + ADP + H(+). With respect to regulation, inhibition by zinc ions. The polypeptide is Fructokinase (Fusobacterium mortiferum).